A 252-amino-acid chain; its full sequence is NLP effector protein Pc118356 (252 aa).

The N-terminal stretch at 1-17 is a signal peptide; it reads MALTVLAATALTALIMG. Residues Asn20 and Asn67 are each glycosylated (N-linked (GlcNAc...) asparagine). The Hepta-peptide GHRHDWE motif motif lies at 121–127; it reads QDRHFWE. An N-linked (GlcNAc...) asparagine glycan is attached at Asn166.

Belongs to the Necrosis inducing protein (NPP1) family.

The protein localises to the secreted. Secreted effector that contributes strongly to virulence during infection by P.capsici. The protein is NLP effector protein Pc118356 of Phytophthora capsici.